The sequence spans 166 residues: Transcription elongation factor GreA (166 aa).

The protein belongs to the GreA/GreB family.

In terms of biological role, necessary for efficient RNA polymerase transcription elongation past template-encoded arresting sites. The arresting sites in DNA have the property of trapping a certain fraction of elongating RNA polymerases that pass through, resulting in locked ternary complexes. Cleavage of the nascent transcript by cleavage factors such as GreA or GreB allows the resumption of elongation from the new 3'terminus. GreA releases sequences of 2 to 3 nucleotides. In Anaeromyxobacter sp. (strain K), this protein is Transcription elongation factor GreA.